We begin with the raw amino-acid sequence, 86 residues long: Translation initiation factor IF-1 2 (86 aa).

The 72-residue stretch at 1-72 (MAKEELLEME…TKARISFRHK (72 aa)) folds into the S1-like domain.

Belongs to the IF-1 family. In terms of assembly, component of the 30S ribosomal translation pre-initiation complex which assembles on the 30S ribosome in the order IF-2 and IF-3, IF-1 and N-formylmethionyl-tRNA(fMet); mRNA recruitment can occur at any time during PIC assembly.

The protein localises to the cytoplasm. Its function is as follows. One of the essential components for the initiation of protein synthesis. Stabilizes the binding of IF-2 and IF-3 on the 30S subunit to which N-formylmethionyl-tRNA(fMet) subsequently binds. Helps modulate mRNA selection, yielding the 30S pre-initiation complex (PIC). Upon addition of the 50S ribosomal subunit IF-1, IF-2 and IF-3 are released leaving the mature 70S translation initiation complex. This chain is Translation initiation factor IF-1 2, found in Aromatoleum aromaticum (strain DSM 19018 / LMG 30748 / EbN1) (Azoarcus sp. (strain EbN1)).